We begin with the raw amino-acid sequence, 504 residues long: uncharacterized protein (504 aa).

Residues 6-26 traverse the membrane as a helical segment; that stretch reads NLFIIFIFLFLLSQVSAYITF.

To M.jannaschii MJ1506 and MJ1561.

It is found in the membrane. This is an uncharacterized protein from Methanocaldococcus jannaschii (strain ATCC 43067 / DSM 2661 / JAL-1 / JCM 10045 / NBRC 100440) (Methanococcus jannaschii).